Here is a 394-residue protein sequence, read N- to C-terminus: Flavohemoprotein (394 aa).

Positions 1–138 (MLTQEHINII…LAQVFIDREG (138 aa)) constitute a Globin domain. H85 serves as a coordination point for heme b. Catalysis depends on charge relay system residues Y95 and E137. A reductase region spans residues 149 to 394 (GGWRDGRTFV…VFGPHAQLAA (246 aa)). Residues 152-262 (RDGRTFVVRE…YAPAGDFFYV (111 aa)) form the FAD-binding FR-type domain. FAD-binding positions include Y190 and 206–209 (RQYS). 274–279 (GVGATP) lines the NADP(+) pocket. Residue 385 to 388 (VFGP) participates in FAD binding.

Belongs to the globin family. Two-domain flavohemoproteins subfamily. The protein in the C-terminal section; belongs to the flavoprotein pyridine nucleotide cytochrome reductase family. Requires heme b as cofactor. The cofactor is FAD.

The enzyme catalyses 2 nitric oxide + NADPH + 2 O2 = 2 nitrate + NADP(+) + H(+). It carries out the reaction 2 nitric oxide + NADH + 2 O2 = 2 nitrate + NAD(+) + H(+). Is involved in NO detoxification in an aerobic process, termed nitric oxide dioxygenase (NOD) reaction that utilizes O(2) and NAD(P)H to convert NO to nitrate, which protects the bacterium from various noxious nitrogen compounds. Therefore, plays a central role in the inducible response to nitrosative stress. This chain is Flavohemoprotein (hmp), found in Vibrio cholerae serotype O1 (strain ATCC 39315 / El Tor Inaba N16961).